The sequence spans 310 residues: Carbamate kinase (310 aa).

The protein belongs to the carbamate kinase family. Homodimer.

It localises to the cytoplasm. The enzyme catalyses hydrogencarbonate + NH4(+) + ATP = carbamoyl phosphate + ADP + H2O + H(+). It functions in the pathway amino-acid degradation; L-arginine degradation via ADI pathway. The polypeptide is Carbamate kinase (Haemophilus influenzae (strain ATCC 51907 / DSM 11121 / KW20 / Rd)).